Reading from the N-terminus, the 336-residue chain is NADH-quinone oxidoreductase subunit H (336 aa).

8 helical membrane passes run Y4–A24, Y75–I95, L108–G128, M154–I174, L181–I201, L233–F253, F272–W292, and L308–V328.

It belongs to the complex I subunit 1 family. NDH-1 is composed of 14 different subunits. Subunits NuoA, H, J, K, L, M, N constitute the membrane sector of the complex.

It localises to the cell inner membrane. It catalyses the reaction a quinone + NADH + 5 H(+)(in) = a quinol + NAD(+) + 4 H(+)(out). Its function is as follows. NDH-1 shuttles electrons from NADH, via FMN and iron-sulfur (Fe-S) centers, to quinones in the respiratory chain. The immediate electron acceptor for the enzyme in this species is believed to be ubiquinone. Couples the redox reaction to proton translocation (for every two electrons transferred, four hydrogen ions are translocated across the cytoplasmic membrane), and thus conserves the redox energy in a proton gradient. This subunit may bind ubiquinone. This chain is NADH-quinone oxidoreductase subunit H, found in Francisella philomiragia subsp. philomiragia (strain ATCC 25017 / CCUG 19701 / FSC 153 / O#319-036).